Here is a 360-residue protein sequence, read N- to C-terminus: MDFSTNGSEESELYHAQIHLYKHIYNFVSSMALKSAVELGIADAIHNHGKPMTLPELASSLKLHPSKVNILYRFLRLLTHNGFFAKTTVKSNGEEEETAYVLTPSSKLLVSGKSTCLSSVVKGALHPISLDLWGVSKKWFHEDKEQTLFECATGENYWDFLNKDSDYLSIFQDAMAADSRLFKLAIQENKHVFEGLESLVDVAGGTGGVAKLIHEAFPHIKCTVFDQPQVVGNLTGNENLNFVSGDMFKSVPSADAVLLKWVLHDWNDELSLKILKKSKEAISHKGKDGKVIIIDISIDDNSDDHGLTELQLEYDVVMLTMFLGKERTKKEWEKLIYDAGFSRYKITPICGFKSLIEVYP.

S-adenosyl-L-methionine contacts are provided by residues 202–205, Asp-226, 226–227, 246–247, and Lys-260; these read VAGG, DQ, and DM. The active-site Proton acceptor is the His-264.

This sequence belongs to the class I-like SAM-binding methyltransferase superfamily. Cation-independent O-methyltransferase family. COMT subfamily.

It carries out the reaction (+)-6a-hydroxymaackiain + S-adenosyl-L-methionine = (+)-pisatin + S-adenosyl-L-homocysteine + H(+). Functionally, 3-O-methyltransferase involved in the phytoalexin pisatin biosynthesis. Can use (+)-6a-hydroxymaackiain, (+)-maackiain and with a lower activity (+)-medicarpin and 2,7,4'-trihydroxyisoflavanone as substrates, but not (-)-6a-hydroxymaackiain, daidzein, formononetin or isoliquiritigenin. The protein is (+)-6a-hydroxymaackiain 3-O-methyltransferase 2 (HMM2) of Pisum sativum (Garden pea).